A 489-amino-acid polypeptide reads, in one-letter code: 3-octaprenyl-4-hydroxybenzoate carboxy-lyase (489 aa).

Asparagine 172 contributes to the Mn(2+) binding site. Residues 175 to 177 (IYR), 189 to 191 (RWL), and 194 to 195 (RG) each bind prenylated FMN. A Mn(2+)-binding site is contributed by glutamate 238. Aspartate 287 serves as the catalytic Proton donor.

The protein belongs to the UbiD family. In terms of assembly, homohexamer. The cofactor is prenylated FMN. Mn(2+) is required as a cofactor.

The protein localises to the cell membrane. The enzyme catalyses a 4-hydroxy-3-(all-trans-polyprenyl)benzoate + H(+) = a 2-(all-trans-polyprenyl)phenol + CO2. It participates in cofactor biosynthesis; ubiquinone biosynthesis. Functionally, catalyzes the decarboxylation of 3-octaprenyl-4-hydroxy benzoate to 2-octaprenylphenol, an intermediate step in ubiquinone biosynthesis. This chain is 3-octaprenyl-4-hydroxybenzoate carboxy-lyase, found in Psychromonas ingrahamii (strain DSM 17664 / CCUG 51855 / 37).